We begin with the raw amino-acid sequence, 877 residues long: Alanine--tRNA ligase (877 aa).

Zn(2+) contacts are provided by histidine 562, histidine 566, cysteine 664, and histidine 668.

This sequence belongs to the class-II aminoacyl-tRNA synthetase family. Zn(2+) is required as a cofactor.

It is found in the cytoplasm. The catalysed reaction is tRNA(Ala) + L-alanine + ATP = L-alanyl-tRNA(Ala) + AMP + diphosphate. Catalyzes the attachment of alanine to tRNA(Ala) in a two-step reaction: alanine is first activated by ATP to form Ala-AMP and then transferred to the acceptor end of tRNA(Ala). Also edits incorrectly charged Ser-tRNA(Ala) and Gly-tRNA(Ala) via its editing domain. In Synechocystis sp. (strain ATCC 27184 / PCC 6803 / Kazusa), this protein is Alanine--tRNA ligase.